A 67-amino-acid polypeptide reads, in one-letter code: DNA-directed RNA polymerase subunit Rpo10 (67 aa).

Zn(2+) is bound by residues Cys7, Cys10, Cys44, and Cys45.

It belongs to the archaeal Rpo10/eukaryotic RPB10 RNA polymerase subunit family. In terms of assembly, part of the RNA polymerase complex. The cofactor is Zn(2+).

The protein localises to the cytoplasm. The catalysed reaction is RNA(n) + a ribonucleoside 5'-triphosphate = RNA(n+1) + diphosphate. DNA-dependent RNA polymerase (RNAP) catalyzes the transcription of DNA into RNA using the four ribonucleoside triphosphates as substrates. This is DNA-directed RNA polymerase subunit Rpo10 from Caldivirga maquilingensis (strain ATCC 700844 / DSM 13496 / JCM 10307 / IC-167).